Here is a 247-residue protein sequence, read N- to C-terminus: E3 ubiquitin-protein ligase RNF182 (247 aa).

An RING-type zinc finger spans residues 20-68; that stretch reads CKICYNRYNLKQRKPKVLECCHRVCAKCLYKIIDFGDSPQGVIVCPFCR. A run of 2 helical transmembrane segments spans residues 184-204 and 211-231; these read VLVW…IYLL and LGVV…VYGF.

As to quaternary structure, interacts with ATP6V0C.

Its subcellular location is the membrane. The protein resides in the cytoplasm. It catalyses the reaction S-ubiquitinyl-[E2 ubiquitin-conjugating enzyme]-L-cysteine + [acceptor protein]-L-lysine = [E2 ubiquitin-conjugating enzyme]-L-cysteine + N(6)-ubiquitinyl-[acceptor protein]-L-lysine.. It participates in protein modification; protein ubiquitination. In terms of biological role, E3 ubiquitin-protein ligase that mediates the ubiquitination of ATP6V0C and targets it to degradation via the ubiquitin-proteasome pathway. Also plays a role in the inhibition of TLR-triggered innate immune response by mediating 'Lys'-48-linked ubiquitination and subsequent degradation of NF-kappa-B component RELA. The polypeptide is E3 ubiquitin-protein ligase RNF182 (RNF182) (Ailuropoda melanoleuca (Giant panda)).